Consider the following 177-residue polypeptide: Ribulose bisphosphate carboxylase small subunit, chloroplastic 6 (177 aa).

A chloroplast-targeting transit peptide spans 1 to 56 (MASSMMASTAAVARVGPAQTNMVAPFNGLRSSVAFPATRKANNDLSTLPSNGGRVS).

It belongs to the RuBisCO small chain family. In terms of assembly, heterohexadecamer of 8 large and 8 small subunits.

It is found in the plastid. Its subcellular location is the chloroplast. Its function is as follows. RuBisCO catalyzes two reactions: the carboxylation of D-ribulose 1,5-bisphosphate, the primary event in carbon dioxide fixation, as well as the oxidative fragmentation of the pentose substrate. Both reactions occur simultaneously and in competition at the same active site. Although the small subunit is not catalytic it is essential for maximal activity. This is Ribulose bisphosphate carboxylase small subunit, chloroplastic 6 from Lemna gibba (Swollen duckweed).